A 431-amino-acid chain; its full sequence is Adenylosuccinate synthetase (431 aa).

GTP is bound by residues 12 to 18 (GDEGKGK) and 40 to 42 (GHT). D13 functions as the Proton acceptor in the catalytic mechanism. Residues D13 and G40 each contribute to the Mg(2+) site. IMP-binding positions include 13–16 (DEGK), 38–41 (NAGH), T129, R143, Q224, T239, and R303. The active-site Proton donor is the H41. Residue 299–305 (VTTGRAR) participates in substrate binding. GTP-binding positions include R305, 331-333 (KLD), and 413-415 (GVG).

Belongs to the adenylosuccinate synthetase family. Homodimer. It depends on Mg(2+) as a cofactor.

It is found in the cytoplasm. It catalyses the reaction IMP + L-aspartate + GTP = N(6)-(1,2-dicarboxyethyl)-AMP + GDP + phosphate + 2 H(+). The protein operates within purine metabolism; AMP biosynthesis via de novo pathway; AMP from IMP: step 1/2. In terms of biological role, plays an important role in the de novo pathway of purine nucleotide biosynthesis. Catalyzes the first committed step in the biosynthesis of AMP from IMP. This chain is Adenylosuccinate synthetase, found in Mycobacterium sp. (strain KMS).